A 138-amino-acid chain; its full sequence is Ribulose bisphosphate carboxylase small subunit (138 aa).

This sequence belongs to the RuBisCO small chain family. As to quaternary structure, heterohexadecamer of 8 large and 8 small subunits.

The protein localises to the plastid. It is found in the chloroplast. RuBisCO catalyzes two reactions: the carboxylation of D-ribulose 1,5-bisphosphate, the primary event in carbon dioxide fixation, as well as the oxidative fragmentation of the pentose substrate in the photorespiration process. Both reactions occur simultaneously and in competition at the same active site. Although the small subunit is not catalytic it is essential for maximal activity. This Cyanidioschyzon merolae (strain NIES-3377 / 10D) (Unicellular red alga) protein is Ribulose bisphosphate carboxylase small subunit.